Consider the following 832-residue polypeptide: DNA polymerase I, thermostable (832 aa).

The 86-residue stretch at 175 to 260 folds into the 5'-3' exonuclease domain; the sequence is RPDQWADYRA…DLPLEVDFAK (86 aa). The tract at residues 410 to 832 is polymerase; sequence ERLFANLWGR…IGEDWLSAKE (423 aa).

It belongs to the DNA polymerase type-A family.

It carries out the reaction DNA(n) + a 2'-deoxyribonucleoside 5'-triphosphate = DNA(n+1) + diphosphate. In addition to polymerase activity, this DNA polymerase exhibits 5'-3' exonuclease activity. Unlikely to have 3'-5' exonuclease activity due to absence of a 3'-5' exonuclease domain. The sequence is that of DNA polymerase I, thermostable (polA) from Thermus aquaticus.